Reading from the N-terminus, the 632-residue chain is DNA mismatch repair protein MutL (632 aa).

This sequence belongs to the DNA mismatch repair MutL/HexB family.

This protein is involved in the repair of mismatches in DNA. It is required for dam-dependent methyl-directed DNA mismatch repair. May act as a 'molecular matchmaker', a protein that promotes the formation of a stable complex between two or more DNA-binding proteins in an ATP-dependent manner without itself being part of a final effector complex. In Pseudomonas putida (strain GB-1), this protein is DNA mismatch repair protein MutL.